The primary structure comprises 313 residues: Cytochrome c biogenesis protein CcsA (313 aa).

Helical transmembrane passes span 13–35, 43–63, 67–87, 96–116, 142–162, 219–239, 252–269, and 280–300; these read ISFSIISIVITTHLMTFAREIAG, GMIAVFLRITGLLVTRWIYSG, LSNLYESLIFLSWGFSLIHMI, FLSSITAPSAILTQGFVTSGL, MLLSYAALLCGSLLSIALLVI, VIGIGFTLLTLGILSGAVWAN, ETWAFITWTISAIYLHTR, and AIVASIGFLIIWICYFGVNLL.

It belongs to the CcmF/CycK/Ccl1/NrfE/CcsA family. In terms of assembly, may interact with Ccs1.

It is found in the plastid. It localises to the chloroplast thylakoid membrane. Functionally, required during biogenesis of c-type cytochromes (cytochrome c6 and cytochrome f) at the step of heme attachment. In Amborella trichopoda, this protein is Cytochrome c biogenesis protein CcsA.